A 971-amino-acid chain; its full sequence is Exportin-2 (971 aa).

N-acetylmethionine is present on M1. The Importin N-terminal domain occupies 29-102; that stretch reads AEKFLESVEG…KANIVHLMLS (74 aa). S112 is modified (phosphoserine). N6-acetyllysine is present on residues K574 and K824. Residue S931 is modified to Phosphoserine.

Belongs to the XPO2/CSE1 family. As to quaternary structure, found in a complex with CSE1L/XPO2, Ran and KPNA2. Binds with high affinity to importin-alpha only in the presence of RanGTP. The complex is dissociated by the combined action of RanBP1 and RanGAP1. Interacts with CFTR. Detected in brain, placenta, ovary, testis and trachea (at protein level). Widely expressed. Highly expressed in testis and in proliferating cells.

Its subcellular location is the cytoplasm. The protein localises to the nucleus. Export receptor for importin-alpha. Mediates importin-alpha re-export from the nucleus to the cytoplasm after import substrates (cargos) have been released into the nucleoplasm. In the nucleus binds cooperatively to importin-alpha and to the GTPase Ran in its active GTP-bound form. Docking of this trimeric complex to the nuclear pore complex (NPC) is mediated through binding to nucleoporins. Upon transit of a nuclear export complex into the cytoplasm, disassembling of the complex and hydrolysis of Ran-GTP to Ran-GDP (induced by RANBP1 and RANGAP1, respectively) cause release of the importin-alpha from the export receptor. CSE1L/XPO2 then return to the nuclear compartment and mediate another round of transport. The directionality of nuclear export is thought to be conferred by an asymmetric distribution of the GTP- and GDP-bound forms of Ran between the cytoplasm and nucleus. The chain is Exportin-2 (CSE1L) from Homo sapiens (Human).